The following is a 342-amino-acid chain: uncharacterized protein (342 aa).

Residue 9–31 (LIFGGTTGIGLMTTIDFIIHNTS) coordinates NADP(+). Position 208 (Ser-208) interacts with substrate. Tyr-222 (proton acceptor) is an active-site residue.

It belongs to the short-chain dehydrogenases/reductases (SDR) family.

This is an uncharacterized protein from Acanthamoeba polyphaga (Amoeba).